The sequence spans 163 residues: Large ribosomal subunit protein uL10 (163 aa).

Belongs to the universal ribosomal protein uL10 family. In terms of assembly, part of the ribosomal stalk of the 50S ribosomal subunit. The N-terminus interacts with L11 and the large rRNA to form the base of the stalk. The C-terminus forms an elongated spine to which L12 dimers bind in a sequential fashion forming a multimeric L10(L12)X complex.

Functionally, forms part of the ribosomal stalk, playing a central role in the interaction of the ribosome with GTP-bound translation factors. This chain is Large ribosomal subunit protein uL10, found in Histophilus somni (strain 129Pt) (Haemophilus somnus).